Consider the following 60-residue polypeptide: Large ribosomal subunit protein uL30 (60 aa).

The protein belongs to the universal ribosomal protein uL30 family. As to quaternary structure, part of the 50S ribosomal subunit.

The polypeptide is Large ribosomal subunit protein uL30 (Christiangramia forsetii (strain DSM 17595 / CGMCC 1.15422 / KT0803) (Gramella forsetii)).